Consider the following 1076-residue polypeptide: Histone deacetylase 4 (1076 aa).

The stretch at 66-169 (REQQLQQELL…GKESAVASTE (104 aa)) forms a coiled coil. The interaction with MEF2A stretch occupies residues 117–312 (MLAMKHQQEL…NSSSGNVSTE (196 aa)). Residues 132–162 (KLERHRQEQELEKQHREQKLQQLKNKEKGKE) show a composition bias toward basic and acidic residues. Disordered stretches follow at residues 132 to 166 (KLERHRQEQELEKQHREQKLQQLKNKEKGKESAVA), 205 to 225 (TQHSSLDQSSPPQSGVSASYN), and 239 to 323 (PLRK…PSAP). Polar residues predominate over residues 205-224 (TQHSSLDQSSPPQSGVSASY). Phosphoserine is present on S209. S245 carries the phosphoserine; by CaMK4 and SIK1 modification. Basic and acidic residues predominate over residues 258-273 (KVAERRSSPLLRRKDG). A compositionally biased stretch (low complexity) spans 289-310 (SACSSAPGSGPSSPNSSSGNVS). The short motif at 348–353 (PSLPNI) is the PxLPxI/L motif; mediates interaction with ANKRA2 and 14-3-3 proteins element. S349 bears the Phosphoserine mark. S465 bears the Phosphoserine; by CaMK4 and SIK1 mark. Disordered stretches follow at residues 506–529 (ISKPSEPPRQPESHPEETEEELRE), 541–580 (RLPGQKEPSLAGVQVKQEPIESEEEEAEATRETEPGQRPA), and 622–645 (RPLSRAQSSPASATFPMSVQEPPT). Positions 514 to 529 (RQPESHPEETEEELRE) are enriched in basic and acidic residues. K556 is covalently cross-linked (Glycyl lysine isopeptide (Lys-Gly) (interchain with G-Cter in SUMO)). S562 carries the phosphoserine modification. The span at 626 to 638 (RAQSSPASATFPM) shows a compositional bias: polar residues. The residue at position 629 (S629) is a Phosphoserine; by CaMK4. Residue S630 is modified to Phosphoserine. The interval 652–1076 (GLVYDTLMLK…EEPMEEEPPL (425 aa)) is histone deacetylase. 4 residues coordinate Zn(2+): C664, C666, H672, and C743. H795 is an active-site residue. The Nuclear export signal signature appears at 1043–1076 (EEAETVTAMASLSVGVKPAEKRSEEEPMEEEPPL).

It belongs to the histone deacetylase family. HD type 2 subfamily. Homodimer. Homodimerization via its N-terminal domain. Interacts with HDAC7. Interacts with MEF2A, MEF2C, MEF2D, MORC2 and NR2C1. Interacts with a 14-3-3 chaperone proteins in a phosphorylation dependent manner. Interacts with 14-3-3 protein YWHAB. Interacts with BTBD14B. Interacts with KDM5B. Interacts (via PxLPxI/L motif) with ANKRA2 (via ankyrin repeats). Interacts with CUL7 (as part of the 3M complex); negatively regulated by ANKRA2. Interacts with EP300 in the presence of TFAP2C. Interacts with AHRR. Interacts with MYOCD. Interacts with HSPA1A and HSPA1B leading to their deacetylation at 'Lys-77'. Interacts with ZBTB7B; the interaction allows the recruitment of HDAC4 on CD8 loci for deacetylation and possible inhibition of CD8 genes expression. Interacts with DHX36. Interacts with SIK3; this interaction leads to HDAC4 retention in the cytoplasm. Interacts with ZNF638. Post-translationally, phosphorylated by CaMK4 at Ser-245, Ser-465 and Ser-629. Phosphorylation at other residues by CaMK2D is required for the interaction with 14-3-3. Phosphorylation at Ser-349, within the PxLPxI/L motif, impairs the binding of ANKRA2 but generates a high-affinity docking site for 14-3-3. Sumoylation on Lys-556 is promoted by the E3 SUMO-protein ligase RANBP2, and prevented by phosphorylation by CaMK4.

It localises to the nucleus. It is found in the cytoplasm. The enzyme catalyses N(6)-acetyl-L-lysyl-[histone] + H2O = L-lysyl-[histone] + acetate. Its function is as follows. Responsible for the deacetylation of lysine residues on the N-terminal part of the core histones (H2A, H2B, H3 and H4). Histone deacetylation gives a tag for epigenetic repression and plays an important role in transcriptional regulation, cell cycle progression and developmental events. Histone deacetylases act via the formation of large multiprotein complexes. Involved in muscle maturation via its interaction with the myocyte enhancer factors such as MEF2A, MEF2C and MEF2D. Deacetylates HSPA1A and HSPA1A at 'Lys-77' leading to their preferential binding to co-chaperone STUB1. This Mus musculus (Mouse) protein is Histone deacetylase 4 (Hdac4).